The primary structure comprises 655 residues: MAPSAEGASGAPTPEDLKLHQLSQKYTAEAAKRFRPEGLGQFIRLKEVGNERFRALAEDPWVDHAALNAKEPVKDGSRYKFIILGAGYGGLLYAVRLAEAGLASGPDDILMVDAAGGFGGTWWWNRYPGLHCDVESYSYMPLLEETGYIPKSKYAAGPELLEHAYRIATQWKLHDKALFRSNVKTIRWDDESRLWSLEVTEGRGPGQQSRELKLQARYVLLASGILTNPQVPKIPGLETFTGPVFHTARWNYDVTGGSPTDEALNRLEGKRVGIIGTGATAIQVVPKLAKYAKELYVFQRTPSGVWWRGQRPTDPVEWKTKIARKKGWQRERMLNLDSYLTDAAEEGQENMVADGWTEMPAFSAVIGSPRHGIVEPTPEKIAEHLGRLYKLDLPHAEQVRARTDSIVKDPKTAAKLKAWYPTWCKRPTFSDEYLQTFNLPNVHLVDTDGKGVDAANPSGLVVADKEYPLDILVLSTGYVTPSIGGGSPAVRTGVDIYGRGGKSLDDKWQTHGAATLHGVCSNGFPNLFFTPLSQSSQAANNAFTLDVGTEHIVQVIKTAEDRVDGDALVEVTSEAEEAWSFEIMKHAGWFASVTGCTPGYITSEGEALRKSEDPMEMAKRARSGNLSQGMASYMKLLQEYRADGSLKGFDISSRA.

FAD is bound by residues Gly-89, Asp-113, Ala-114, Thr-121, Trp-124, Cys-132, Asp-133, Tyr-139, and Val-183. Thr-277, Thr-280, Thr-301, Lys-425, and Val-452 together coordinate NADPH. Residues Cys-424 and Cys-596 are joined by a disulfide bond. FAD contacts are provided by Thr-492 and Asn-541. Tyr-600 lines the NADPH pocket.

It belongs to the FAD-binding monooxygenase family. FAD is required as a cofactor.

In terms of biological role, polycyclic ketone monooxygenase (PockeMO) that displays excellent enantioselectivity, acts on various ketones, and is particularly active on polycyclic molecules. Breaks C-C bonds through the insertion of a single oxygen atom adjacent to a carbonyl moiety, yielding esters or lactones from ketones. PockeMO is able to convert linear ketones (including cyclohexane and to a lesser extend 4-octanone), cyclic ketones (including cyclohexanone and cyclooctanone), bicyclic ketones and polycyclic ketones (steroids). Performs oxidation of the keto functionalities at both the A and D rings of steroids. Particularly, oxidizes the A ring of stanolone or pregnenolone. Selectively oxidizes the D ring of androstenedione or androstadienedione, steroids with keto groups in both the A and D rings, to yield the pharmaceutically relevant testo(lo)lactone. The protein is Polycyclic ketone monooxygenase of Thermothelomyces thermophilus (strain ATCC 42464 / BCRC 31852 / DSM 1799) (Sporotrichum thermophile).